A 212-amino-acid polypeptide reads, in one-letter code: Adenylate kinase (212 aa).

10–15 lines the ATP pocket; it reads GAGKGT. The NMP stretch occupies residues 30–59; that stretch reads ALGDIFRTIIKTSTSEAELINNYVKQGELV. AMP contacts are provided by residues Arg-36, 57-59, 85-88, and Gln-92; these read ELV and GYPR. An LID region spans residues 122-160; the sequence is GRYSCKNCRKIYNSYFLQPKTDNVCDVCGSSTFDYRKDD. Residue Arg-123 participates in ATP binding. Positions 126 and 129 each coordinate Zn(2+). An ATP-binding site is contributed by 132–133; the sequence is IY. Positions 146 and 149 each coordinate Zn(2+). 2 residues coordinate AMP: Arg-157 and Arg-168. Residue Lys-196 participates in ATP binding.

This sequence belongs to the adenylate kinase family. Monomer.

It localises to the cytoplasm. The enzyme catalyses AMP + ATP = 2 ADP. Its pathway is purine metabolism; AMP biosynthesis via salvage pathway; AMP from ADP: step 1/1. Functionally, catalyzes the reversible transfer of the terminal phosphate group between ATP and AMP. Plays an important role in cellular energy homeostasis and in adenine nucleotide metabolism. The polypeptide is Adenylate kinase (Rickettsia akari (strain Hartford)).